The following is a 375-amino-acid chain: D-alanine--D-alanine ligase (375 aa).

The region spanning 145 to 348 is the ATP-grasp domain; sequence KRLLRDADLE…YPALITRLIE (204 aa). 175 to 230 lines the ATP pocket; the sequence is ITYLGSSLFVKPANQGSSVGVSKVINRISFDQALALAFCFDDKVLVESAINGRELE. Mg(2+)-binding residues include aspartate 302, glutamate 315, and asparagine 317.

Belongs to the D-alanine--D-alanine ligase family. Mg(2+) is required as a cofactor. The cofactor is Mn(2+).

Its subcellular location is the cytoplasm. The catalysed reaction is 2 D-alanine + ATP = D-alanyl-D-alanine + ADP + phosphate + H(+). The protein operates within cell wall biogenesis; peptidoglycan biosynthesis. Cell wall formation. This Baumannia cicadellinicola subsp. Homalodisca coagulata protein is D-alanine--D-alanine ligase.